A 135-amino-acid polypeptide reads, in one-letter code: L-alanine exporter AlaE (135 aa).

A run of 3 helical transmembrane segments spans residues 9–29 (VATVIFFTAVATFSELLIAGM), 75–95 (DILAFLSFQAPVYGATLLIAG), and 96–116 (ASFAEAGTAIGSAIILMILLA).

It belongs to the AlaE exporter family.

The protein localises to the cell inner membrane. Its function is as follows. Exports L-alanine. This chain is L-alanine exporter AlaE, found in Cereibacter sphaeroides (strain ATCC 17023 / DSM 158 / JCM 6121 / CCUG 31486 / LMG 2827 / NBRC 12203 / NCIMB 8253 / ATH 2.4.1.) (Rhodobacter sphaeroides).